The sequence spans 120 residues: NAD(P)H-quinone oxidoreductase subunit 3 (120 aa).

Helical transmembrane passes span 7–27 (YEYFLGFLLACSLVPILSLTA), 64–84 (MFALVFVVFDVETVFLYPWAV), and 89–109 (LGLLAFVEALIFIAILVVALV).

The protein belongs to the complex I subunit 3 family. As to quaternary structure, NDH-1 can be composed of about 15 different subunits; different subcomplexes with different compositions have been identified which probably have different functions.

The protein localises to the cellular thylakoid membrane. It catalyses the reaction a plastoquinone + NADH + (n+1) H(+)(in) = a plastoquinol + NAD(+) + n H(+)(out). The enzyme catalyses a plastoquinone + NADPH + (n+1) H(+)(in) = a plastoquinol + NADP(+) + n H(+)(out). In terms of biological role, NDH-1 shuttles electrons from an unknown electron donor, via FMN and iron-sulfur (Fe-S) centers, to quinones in the respiratory and/or the photosynthetic chain. The immediate electron acceptor for the enzyme in this species is believed to be plastoquinone. Couples the redox reaction to proton translocation, and thus conserves the redox energy in a proton gradient. Cyanobacterial NDH-1 also plays a role in inorganic carbon-concentration. This chain is NAD(P)H-quinone oxidoreductase subunit 3, found in Microcystis aeruginosa (strain NIES-843 / IAM M-2473).